The sequence spans 1025 residues: Multidrug resistance protein MdtC (1025 aa).

Transmembrane regions (helical) follow at residues 3–23 (FFAL…AITL), 333–353 (EVEQ…FLFL), 360–380 (IIPA…MYLC), 387–407 (LSLM…IVVL), 431–451 (VGFT…PLLL), 469–489 (VAIG…CGWM), 528–548 (LVGV…ISIP), 853–873 (VILI…LYES), 875–895 (VHPL…LLAL), 897–917 (LFNA…IGIV), 953–973 (PIMM…LSGG), and 984–1004 (ITIV…TPVV).

It belongs to the resistance-nodulation-cell division (RND) (TC 2.A.6) family. MdtC subfamily. As to quaternary structure, part of a tripartite efflux system composed of MdtA, MdtB and MdtC. MdtC forms a heteromultimer with MdtB.

It is found in the cell inner membrane. In terms of biological role, the MdtABC tripartite complex confers resistance against novobiocin and deoxycholate. In Escherichia coli O9:H4 (strain HS), this protein is Multidrug resistance protein MdtC.